The sequence spans 1112 residues: Constitutive coactivator of PPAR-gamma-like protein 1 (1112 aa).

Positions 339-403 (PPHYLARPNP…YSLSEPALTL (65 aa)) are interaction with YES1, SRC and FYN. The disordered stretch occupies residues 372-525 (QAKPAVPQVP…GKGSHMGTVQ (154 aa)). 2 stretches are compositionally biased toward polar residues: residues 403 to 418 (LDTSGKNLTEQNSYSN) and 433 to 445 (SPINLAQSGSPNH). Over residues 479–500 (GWEKTGSHAEPLARGDPGDQVK) the composition is skewed to basic and acidic residues. Positions 503-512 (GSSTASSGSQ) are enriched in polar residues. The residue at position 653 (T653) is a Phosphothreonine. The tract at residues 827–1112 (AEQAAKVEKM…LEAAVLNKEE (286 aa)) is RNA binding. Omega-N-methylarginine is present on residues R871, R882, and R884. Residues 919-943 (AFSGSDSSRTSKSQGGVQPIPSQGG) form a disordered region. Polar residues predominate over residues 922–934 (GSDSSRTSKSQGG). K930 bears the N6-acetyllysine mark. A Phosphoserine modification is found at S958. Omega-N-methylarginine is present on residues R980 and R984. Phosphoserine is present on residues S1021 and S1042. The disordered stretch occupies residues 1030–1090 (KSKSGESKSS…PCNTNPHLNA (61 aa)). Positions 1070–1090 (HSESALNNDSKPCNTNPHLNA) are enriched in polar residues.

This sequence belongs to the constitutive coactivator of PPAR-gamma family. In terms of assembly, interacts with PURA. Interacts with SRC family protein kinases YES1, SRC and FYN. Upon tyrosine phosphorylation, interacts with PIK3R1. Interacts with IGF2BP1/IMP-1 in an RNA-dependent manner. Arg-980 is dimethylated, probably to asymmetric dimethylarginine. In terms of processing, phosphorylated on tyrosine by src family kinases upon ultraviolet exposure. In terms of tissue distribution, in the brain, predominantly expressed in the hippocampus, caudate putamen, cerebral cortex and cerebellum. Expression is restricted to neurons (at protein level).

The protein resides in the cytoplasm. Its subcellular location is the cell membrane. In terms of biological role, component of the oxidative stress-induced survival signaling. May regulate the activation of SRC family protein kinases. May act as a scaffolding protein enabling SRC family protein kinases to phosphorylate and activate PI3-kinase. Binds IGF2 RNA and promotes the production of IGF2 protein. The chain is Constitutive coactivator of PPAR-gamma-like protein 1 (FAM120A) from Mus musculus (Mouse).